The following is a 139-amino-acid chain: D-ribose pyranase (139 aa).

The active-site Proton donor is the His20. Residues Asp28, His106, and 128-130 (YAN) each bind substrate.

It belongs to the RbsD / FucU family. RbsD subfamily. As to quaternary structure, homodecamer.

Its subcellular location is the cytoplasm. It catalyses the reaction beta-D-ribopyranose = beta-D-ribofuranose. Its pathway is carbohydrate metabolism; D-ribose degradation; D-ribose 5-phosphate from beta-D-ribopyranose: step 1/2. In terms of biological role, catalyzes the interconversion of beta-pyran and beta-furan forms of D-ribose. In Actinobacillus succinogenes (strain ATCC 55618 / DSM 22257 / CCUG 43843 / 130Z), this protein is D-ribose pyranase.